The chain runs to 546 residues: CTP synthase (546 aa).

The interval 1 to 269 (MADTKYIFVT…DKVTLKKLAL (269 aa)) is amidoligase domain. A CTP-binding site is contributed by Ser15. Ser15 serves as a coordination point for UTP. 16–21 (SLGKGI) lines the ATP pocket. Tyr56 provides a ligand contact to L-glutamine. Residue Asp73 participates in ATP binding. The Mg(2+) site is built by Asp73 and Glu143. CTP contacts are provided by residues 150–152 (DIE), 190–195 (KTKPTQ), and Lys226. UTP contacts are provided by residues 190–195 (KTKPTQ) and Lys226. The Glutamine amidotransferase type-1 domain occupies 295 to 537 (HIGLIGKYVE…VKAAHEHSVK (243 aa)). Gly357 serves as a coordination point for L-glutamine. Cys384 functions as the Nucleophile; for glutamine hydrolysis in the catalytic mechanism. L-glutamine-binding positions include 385-388 (LGMQ), Glu408, and Arg465. Residues His510 and Glu512 contribute to the active site.

This sequence belongs to the CTP synthase family. In terms of assembly, homotetramer.

It carries out the reaction UTP + L-glutamine + ATP + H2O = CTP + L-glutamate + ADP + phosphate + 2 H(+). The enzyme catalyses L-glutamine + H2O = L-glutamate + NH4(+). It catalyses the reaction UTP + NH4(+) + ATP = CTP + ADP + phosphate + 2 H(+). The protein operates within pyrimidine metabolism; CTP biosynthesis via de novo pathway; CTP from UDP: step 2/2. With respect to regulation, allosterically activated by GTP, when glutamine is the substrate; GTP has no effect on the reaction when ammonia is the substrate. The allosteric effector GTP functions by stabilizing the protein conformation that binds the tetrahedral intermediate(s) formed during glutamine hydrolysis. Inhibited by the product CTP, via allosteric rather than competitive inhibition. Its function is as follows. Catalyzes the ATP-dependent amination of UTP to CTP with either L-glutamine or ammonia as the source of nitrogen. Regulates intracellular CTP levels through interactions with the four ribonucleotide triphosphates. The protein is CTP synthase of Christiangramia forsetii (strain DSM 17595 / CGMCC 1.15422 / KT0803) (Gramella forsetii).